Here is a 244-residue protein sequence, read N- to C-terminus: Probable phosphatase NT01CX_1282 (244 aa).

Residues His8, His10, His16, His41, Glu74, His102, His132, Asp193, and His195 each contribute to the Zn(2+) site.

Belongs to the PHP family. Zn(2+) serves as cofactor.

This is Probable phosphatase NT01CX_1282 from Clostridium novyi (strain NT).